Reading from the N-terminus, the 259-residue chain is 3-deoxy-manno-octulosonate cytidylyltransferase (259 aa).

This sequence belongs to the KdsB family.

Its subcellular location is the cytoplasm. It carries out the reaction 3-deoxy-alpha-D-manno-oct-2-ulosonate + CTP = CMP-3-deoxy-beta-D-manno-octulosonate + diphosphate. Its pathway is nucleotide-sugar biosynthesis; CMP-3-deoxy-D-manno-octulosonate biosynthesis; CMP-3-deoxy-D-manno-octulosonate from 3-deoxy-D-manno-octulosonate and CTP: step 1/1. The protein operates within bacterial outer membrane biogenesis; lipopolysaccharide biosynthesis. In terms of biological role, activates KDO (a required 8-carbon sugar) for incorporation into bacterial lipopolysaccharide in Gram-negative bacteria. This Alkalilimnicola ehrlichii (strain ATCC BAA-1101 / DSM 17681 / MLHE-1) protein is 3-deoxy-manno-octulosonate cytidylyltransferase.